Consider the following 630-residue polypeptide: 1-deoxy-D-xylulose-5-phosphate synthase (630 aa).

Residues His72 and 113–115 (GHS) each bind thiamine diphosphate. Asp144 contributes to the Mg(2+) binding site. Thiamine diphosphate-binding positions include 145–146 (GA), Asn173, Tyr284, and Glu367. Position 173 (Asn173) interacts with Mg(2+).

It belongs to the transketolase family. DXPS subfamily. Homodimer. The cofactor is Mg(2+). It depends on thiamine diphosphate as a cofactor.

The enzyme catalyses D-glyceraldehyde 3-phosphate + pyruvate + H(+) = 1-deoxy-D-xylulose 5-phosphate + CO2. It participates in metabolic intermediate biosynthesis; 1-deoxy-D-xylulose 5-phosphate biosynthesis; 1-deoxy-D-xylulose 5-phosphate from D-glyceraldehyde 3-phosphate and pyruvate: step 1/1. Its function is as follows. Catalyzes the acyloin condensation reaction between C atoms 2 and 3 of pyruvate and glyceraldehyde 3-phosphate to yield 1-deoxy-D-xylulose-5-phosphate (DXP). In Bacillus cereus (strain ATCC 10987 / NRS 248), this protein is 1-deoxy-D-xylulose-5-phosphate synthase.